We begin with the raw amino-acid sequence, 139 residues long: ATP synthase epsilon chain (139 aa).

The tract at residues 89-110 is disordered; it reads EARAEQARAEAEARRREAQSEH.

This sequence belongs to the ATPase epsilon chain family. F-type ATPases have 2 components, CF(1) - the catalytic core - and CF(0) - the membrane proton channel. CF(1) has five subunits: alpha(3), beta(3), gamma(1), delta(1), epsilon(1). CF(0) has three main subunits: a, b and c.

The protein resides in the cell membrane. Its function is as follows. Produces ATP from ADP in the presence of a proton gradient across the membrane. This Chloroflexus aggregans (strain MD-66 / DSM 9485) protein is ATP synthase epsilon chain.